Here is a 219-residue protein sequence, read N- to C-terminus: uncharacterized protein (219 aa).

Positions 1 to 22 (MKKRRKICYCNTALLLMILLAG) are cleaved as a signal peptide. A lipid anchor (N-palmitoyl cysteine) is attached at cysteine 23. Cysteine 23 is lipidated: S-diacylglycerol cysteine. The disordered stretch occupies residues 26–89 (SKDGEAQQPS…SAEEKSKEDN (64 aa)). The segment covering 32–42 (QQPSNQASAVQ) has biased composition (polar residues). Residues 43–61 (TDEKHTEPEESTKIRKDEA) are compositionally biased toward basic and acidic residues.

It is found in the cell membrane. This is an uncharacterized protein from Bacillus subtilis (strain 168).